Here is a 946-residue protein sequence, read N- to C-terminus: Protein translocase subunit SecA (946 aa).

ATP contacts are provided by residues Q87, 105-109 (GEGKT), and D524. Disordered stretches follow at residues 872–892 (PEQP…NTGE) and 904–946 (PADT…GRYA). Positions 907–917 (TVEKSERDPNR) are enriched in basic and acidic residues. 4 residues coordinate Zn(2+): C930, C932, C941, and H942. Basic residues predominate over residues 936 to 946 (KKYKHCHGRYA).

It belongs to the SecA family. Monomer and homodimer. Part of the essential Sec protein translocation apparatus which comprises SecA, SecYEG and auxiliary proteins SecDF-YajC and YidC. Requires Zn(2+) as cofactor.

Its subcellular location is the cell inner membrane. It is found in the cytoplasm. It carries out the reaction ATP + H2O + cellular proteinSide 1 = ADP + phosphate + cellular proteinSide 2.. Part of the Sec protein translocase complex. Interacts with the SecYEG preprotein conducting channel. Has a central role in coupling the hydrolysis of ATP to the transfer of proteins into and across the cell membrane, serving both as a receptor for the preprotein-SecB complex and as an ATP-driven molecular motor driving the stepwise translocation of polypeptide chains across the membrane. This Rhodopseudomonas palustris (strain BisB5) protein is Protein translocase subunit SecA.